The chain runs to 329 residues: 4-hydroxythreonine-4-phosphate dehydrogenase (329 aa).

Substrate contacts are provided by His-136 and Thr-137. His-166, His-211, and His-266 together coordinate a divalent metal cation. Residues Lys-274, Asn-283, and Arg-292 each contribute to the substrate site.

It belongs to the PdxA family. In terms of assembly, homodimer. It depends on Zn(2+) as a cofactor. Requires Mg(2+) as cofactor. Co(2+) is required as a cofactor.

It is found in the cytoplasm. The catalysed reaction is 4-(phosphooxy)-L-threonine + NAD(+) = 3-amino-2-oxopropyl phosphate + CO2 + NADH. The protein operates within cofactor biosynthesis; pyridoxine 5'-phosphate biosynthesis; pyridoxine 5'-phosphate from D-erythrose 4-phosphate: step 4/5. Functionally, catalyzes the NAD(P)-dependent oxidation of 4-(phosphooxy)-L-threonine (HTP) into 2-amino-3-oxo-4-(phosphooxy)butyric acid which spontaneously decarboxylates to form 3-amino-2-oxopropyl phosphate (AHAP). The sequence is that of 4-hydroxythreonine-4-phosphate dehydrogenase from Shigella sonnei (strain Ss046).